Here is an 82-residue protein sequence, read N- to C-terminus: Small ribosomal subunit protein bS16 (82 aa).

It belongs to the bacterial ribosomal protein bS16 family.

The polypeptide is Small ribosomal subunit protein bS16 (Psychromonas ingrahamii (strain DSM 17664 / CCUG 51855 / 37)).